Here is a 147-residue protein sequence, read N- to C-terminus: Adenylylsulfatase HINT1 (147 aa).

Residues 37–147 form the HIT domain; it reads IFDKIISKEI…GGRQMNWPPG (111 aa). A Histidine triad motif motif is present at residues 131-135; the sequence is HIHVH. The Tele-AMP-histidine intermediate role is filled by H133. H135 is a substrate binding site.

It is found in the peroxisome. The protein localises to the plastid. It localises to the chloroplast. The catalysed reaction is adenosine 5'-phosphosulfate + H2O = sulfate + AMP + 2 H(+). Its function is as follows. Possesses adenylylsulfatase activity in vitro. This chain is Adenylylsulfatase HINT1, found in Arabidopsis thaliana (Mouse-ear cress).